The sequence spans 567 residues: MNSTPDLISPQKSSENSNADLPSNSSQVMNMPEEKGVQDDFQAEADQVLTNPNTGKGAYVTVSICCVMVAFGGFVFGWDTGTISGFVAQTDFLRRFGMKHKDGSYYLSKVRTGLIVSIFNIGCAIGGIILAKLGDMYGRKMGLIVVVVIYIIGIIIQIASINKWYQYFIGRIISGLGVGGIAVLSPMLISEVAPKEMRGTLVSCYQLMITLGIFLGYCTNFGTKNYSNSVQWRVPLGLCFAWALFMIGGMTFVPESPRYLVEAGQIDEARASLSKVNKVAPDHPFIQQELEVIEASVEEARAAGSASWGELFTGKPAMFKRTMMGIMIQSLQQLTGDNYFFYYGTTVFNAVGMSDSFETSIVFGVVNFFSTCCSLYTVDRFGRRNCLLYGAIGMVCCYVVYASVGVTRLWPNGEGNGSSKGAGNCMIVFACFYIFCFATTWAPIAYVVISETFPLRVKSKAMSIATAANWLWGFLIGFFTPFITGAINFYYGYVFMGCMVFAYFYVFFFVPETKGLTLEEVNDMYAEGVLPWKSASWVPTSQRGANYDADALMHDDQPFYKKMFGKK.

Polar residues predominate over residues 1–29 (MNSTPDLISPQKSSENSNADLPSNSSQVM). The tract at residues 1 to 30 (MNSTPDLISPQKSSENSNADLPSNSSQVMN) is disordered. Over 1-57 (MNSTPDLISPQKSSENSNADLPSNSSQVMNMPEEKGVQDDFQAEADQVLTNPNTGKG) the chain is Cytoplasmic. A Phosphoserine modification is found at Ser23. Residues 58-78 (AYVTVSICCVMVAFGGFVFGW) traverse the membrane as a helical segment. The Extracellular portion of the chain corresponds to 79–113 (DTGTISGFVAQTDFLRRFGMKHKDGSYYLSKVRTG). Residues 114 to 134 (LIVSIFNIGCAIGGIILAKLG) form a helical membrane-spanning segment. Residues 135 to 140 (DMYGRK) are Cytoplasmic-facing. A helical membrane pass occupies residues 141 to 161 (MGLIVVVVIYIIGIIIQIASI). At 162-171 (NKWYQYFIGR) the chain is on the extracellular side. Residues 172 to 192 (IISGLGVGGIAVLSPMLISEV) form a helical membrane-spanning segment. Topologically, residues 193–198 (APKEMR) are cytoplasmic. A helical membrane pass occupies residues 199–219 (GTLVSCYQLMITLGIFLGYCT). Residues 220–233 (NFGTKNYSNSVQWR) are Extracellular-facing. An N-linked (GlcNAc...) asparagine glycan is attached at Asn225. The chain crosses the membrane as a helical span at residues 234–254 (VPLGLCFAWALFMIGGMTFVP). Over 255–337 (ESPRYLVEAG…IQSLQQLTGD (83 aa)) the chain is Cytoplasmic. The helical transmembrane segment at 338–354 (NYFFYYGTTVFNAVGMS) threads the bilayer. The Extracellular segment spans residues 355–360 (DSFETS). A helical membrane pass occupies residues 361–378 (IVFGVVNFFSTCCSLYTV). Residues 379–385 (DRFGRRN) lie on the Cytoplasmic side of the membrane. A helical transmembrane segment spans residues 386–406 (CLLYGAIGMVCCYVVYASVGV). The Extracellular portion of the chain corresponds to 407-428 (TRLWPNGEGNGSSKGAGNCMIV). Asn416 carries N-linked (GlcNAc...) asparagine glycosylation. Residues 429-449 (FACFYIFCFATTWAPIAYVVI) traverse the membrane as a helical segment. Residues 450–466 (SETFPLRVKSKAMSIAT) are Cytoplasmic-facing. Residues 467–487 (AANWLWGFLIGFFTPFITGAI) traverse the membrane as a helical segment. Asn488 is a topological domain (extracellular). Residues 489-509 (FYYGYVFMGCMVFAYFYVFFF) traverse the membrane as a helical segment. Residues 510–567 (VPETKGLTLEEVNDMYAEGVLPWKSASWVPTSQRGANYDADALMHDDQPFYKKMFGKK) lie on the Cytoplasmic side of the membrane.

Belongs to the major facilitator superfamily. Sugar transporter (TC 2.A.1.1) family.

The protein localises to the membrane. Low-affinity glucose transporter. This is Low-affinity glucose transporter HXT3 (HXT3) from Saccharomyces cerevisiae (strain ATCC 204508 / S288c) (Baker's yeast).